Consider the following 810-residue polypeptide: Bifunctional aspartokinase/homoserine dehydrogenase 2 (810 aa).

The tract at residues 2 to 252 (SVIAQAGAKG…VKDACLLPLL (251 aa)) is aspartokinase. Positions 253–463 (RLDEASELAR…RAEKRIGLVL (211 aa)) are interface. Residues 464 to 810 (FGKGNIGSRW…SDINRLAQLL (347 aa)) form a homoserine dehydrogenase region. Residues Asn-468 and Ile-469 each coordinate NADP(+). The NAD(+) site is built by Ile-469 and Val-498. Ile-469 lines the NADPH pocket. NADP(+)-binding residues include Arg-501, Thr-549, and Lys-573. Thr-549 lines the NAD(+) pocket. Thr-549 and Lys-573 together coordinate NADPH. The Na(+) site is built by Val-603, Ala-605, and Leu-607. Residues Gly-658 and Glu-661 each coordinate NADP(+). 2 residues coordinate L-homoserine: Glu-661 and Asp-672. The active-site Proton donor is Lys-676. Gly-791 serves as a coordination point for NADP(+). An NAD(+)-binding site is contributed by Gly-791. Gly-791 provides a ligand contact to NADPH.

It in the N-terminal section; belongs to the aspartokinase family. This sequence in the C-terminal section; belongs to the homoserine dehydrogenase family. Homotetramer. The cofactor is a metal cation.

The catalysed reaction is L-homoserine + NADP(+) = L-aspartate 4-semialdehyde + NADPH + H(+). It catalyses the reaction L-homoserine + NAD(+) = L-aspartate 4-semialdehyde + NADH + H(+). The enzyme catalyses L-aspartate + ATP = 4-phospho-L-aspartate + ADP. Its pathway is amino-acid biosynthesis; L-lysine biosynthesis via DAP pathway; (S)-tetrahydrodipicolinate from L-aspartate: step 1/4. It participates in amino-acid biosynthesis; L-methionine biosynthesis via de novo pathway; L-homoserine from L-aspartate: step 1/3. The protein operates within amino-acid biosynthesis; L-methionine biosynthesis via de novo pathway; L-homoserine from L-aspartate: step 3/3. It functions in the pathway amino-acid biosynthesis; L-threonine biosynthesis; L-threonine from L-aspartate: step 1/5. Its pathway is amino-acid biosynthesis; L-threonine biosynthesis; L-threonine from L-aspartate: step 3/5. Its function is as follows. Bifunctional aspartate kinase and homoserine dehydrogenase that catalyzes the first and the third steps toward the synthesis of lysine, methionine and threonine from aspartate. The polypeptide is Bifunctional aspartokinase/homoserine dehydrogenase 2 (metL) (Escherichia coli (strain K12)).